A 311-amino-acid polypeptide reads, in one-letter code: Aspartate carbamoyltransferase catalytic subunit (311 aa).

Residues Arg-58 and Thr-59 each coordinate carbamoyl phosphate. Lys-86 lines the L-aspartate pocket. Residues Arg-108, His-136, and Gln-139 each coordinate carbamoyl phosphate. Arg-169 and Arg-224 together coordinate L-aspartate. Gly-265 and Pro-266 together coordinate carbamoyl phosphate.

The protein belongs to the aspartate/ornithine carbamoyltransferase superfamily. ATCase family. In terms of assembly, heterododecamer (2C3:3R2) of six catalytic PyrB chains organized as two trimers (C3), and six regulatory PyrI chains organized as three dimers (R2).

It carries out the reaction carbamoyl phosphate + L-aspartate = N-carbamoyl-L-aspartate + phosphate + H(+). It functions in the pathway pyrimidine metabolism; UMP biosynthesis via de novo pathway; (S)-dihydroorotate from bicarbonate: step 2/3. Functionally, catalyzes the condensation of carbamoyl phosphate and aspartate to form carbamoyl aspartate and inorganic phosphate, the committed step in the de novo pyrimidine nucleotide biosynthesis pathway. The protein is Aspartate carbamoyltransferase catalytic subunit of Geotalea uraniireducens (strain Rf4) (Geobacter uraniireducens).